The primary structure comprises 971 residues: Exportin-2 (971 aa).

Positions 29–102 (AEKFLESVEG…KANIVNLMLT (74 aa)) constitute an Importin N-terminal domain.

The protein belongs to the XPO2/CSE1 family. As to quaternary structure, interacts with cftr. Detected in larval gut, liver, exocrine pancreas and part of the brain and retina at 96 hpf.

The protein localises to the cytoplasm. The protein resides in the nucleus. It is found in the apical cell membrane. It localises to the basal cell membrane. Its subcellular location is the lateral cell membrane. Functionally, export receptor for importin alpha. Mediates importin-alpha re-export from the nucleus to the cytoplasm after import substrates have been released into the nucleoplasm. Negatively regulates fluid secretion and plays a role in fluid homeostasis by down-regulating cftr activity. The polypeptide is Exportin-2 (cse1l) (Danio rerio (Zebrafish)).